Consider the following 416-residue polypeptide: Serine hydroxymethyltransferase (416 aa).

Residues Leu117 and 121-123 (GHL) each bind (6S)-5,6,7,8-tetrahydrofolate. Lys225 is modified (N6-(pyridoxal phosphate)lysine). 351–353 (SPF) contacts (6S)-5,6,7,8-tetrahydrofolate.

Belongs to the SHMT family. Homodimer. Requires pyridoxal 5'-phosphate as cofactor.

The protein resides in the cytoplasm. It carries out the reaction (6R)-5,10-methylene-5,6,7,8-tetrahydrofolate + glycine + H2O = (6S)-5,6,7,8-tetrahydrofolate + L-serine. The protein operates within one-carbon metabolism; tetrahydrofolate interconversion. It functions in the pathway amino-acid biosynthesis; glycine biosynthesis; glycine from L-serine: step 1/1. Functionally, catalyzes the reversible interconversion of serine and glycine with tetrahydrofolate (THF) serving as the one-carbon carrier. This reaction serves as the major source of one-carbon groups required for the biosynthesis of purines, thymidylate, methionine, and other important biomolecules. Also exhibits THF-independent aldolase activity toward beta-hydroxyamino acids, producing glycine and aldehydes, via a retro-aldol mechanism. This chain is Serine hydroxymethyltransferase, found in Blochmanniella pennsylvanica (strain BPEN).